Consider the following 315-residue polypeptide: GPN-loop GTPase 2 (315 aa).

12-17 lines the GTP pocket; that stretch reads GSGKST. A Gly-Pro-Asn (GPN)-loop; involved in dimer interface motif is present at residues 69-71; sequence GPN. 172 to 175 is a GTP binding site; that stretch reads SKAD.

The protein belongs to the GPN-loop GTPase family. As to quaternary structure, heterodimers with gpn1 or fet5/gpn3. Binds to RNA polymerase II (RNAPII).

The protein resides in the cytoplasm. It localises to the nucleus. In terms of biological role, small GTPase required for proper nuclear import of RNA polymerase II and III (RNAPII and RNAPIII). May act at an RNAP assembly step prior to nuclear import. This is GPN-loop GTPase 2 from Schizosaccharomyces pombe (strain 972 / ATCC 24843) (Fission yeast).